The primary structure comprises 335 residues: Acetyl-coenzyme A carboxylase carboxyl transferase subunit alpha (335 aa).

One can recognise a CoA carboxyltransferase C-terminal domain in the interval 40 to 294 (QLETLATRRR…KASIERHLSE (255 aa)).

It belongs to the AccA family. As to quaternary structure, acetyl-CoA carboxylase is a heterohexamer composed of biotin carboxyl carrier protein (AccB), biotin carboxylase (AccC) and two subunits each of ACCase subunit alpha (AccA) and ACCase subunit beta (AccD).

The protein localises to the cytoplasm. The catalysed reaction is N(6)-carboxybiotinyl-L-lysyl-[protein] + acetyl-CoA = N(6)-biotinyl-L-lysyl-[protein] + malonyl-CoA. It functions in the pathway lipid metabolism; malonyl-CoA biosynthesis; malonyl-CoA from acetyl-CoA: step 1/1. Its function is as follows. Component of the acetyl coenzyme A carboxylase (ACC) complex. First, biotin carboxylase catalyzes the carboxylation of biotin on its carrier protein (BCCP) and then the CO(2) group is transferred by the carboxyltransferase to acetyl-CoA to form malonyl-CoA. This Prochlorococcus marinus (strain MIT 9515) protein is Acetyl-coenzyme A carboxylase carboxyl transferase subunit alpha.